A 117-amino-acid polypeptide reads, in one-letter code: Large ribosomal subunit protein uL18 (117 aa).

Belongs to the universal ribosomal protein uL18 family. In terms of assembly, part of the 50S ribosomal subunit; part of the 5S rRNA/L5/L18/L25 subcomplex. Contacts the 5S and 23S rRNAs.

This is one of the proteins that bind and probably mediate the attachment of the 5S RNA into the large ribosomal subunit, where it forms part of the central protuberance. The protein is Large ribosomal subunit protein uL18 of Aliivibrio fischeri (strain ATCC 700601 / ES114) (Vibrio fischeri).